The chain runs to 264 residues: 3-methyl-2-oxobutanoate hydroxymethyltransferase (264 aa).

Positions 45 and 84 each coordinate Mg(2+). Residues 45-46 (DS), aspartate 84, and lysine 112 contribute to the 3-methyl-2-oxobutanoate site. Glutamate 114 lines the Mg(2+) pocket. Catalysis depends on glutamate 181, which acts as the Proton acceptor.

It belongs to the PanB family. In terms of assembly, homodecamer; pentamer of dimers. It depends on Mg(2+) as a cofactor.

It is found in the cytoplasm. It catalyses the reaction 3-methyl-2-oxobutanoate + (6R)-5,10-methylene-5,6,7,8-tetrahydrofolate + H2O = 2-dehydropantoate + (6S)-5,6,7,8-tetrahydrofolate. The protein operates within cofactor biosynthesis; (R)-pantothenate biosynthesis; (R)-pantoate from 3-methyl-2-oxobutanoate: step 1/2. Its function is as follows. Catalyzes the reversible reaction in which hydroxymethyl group from 5,10-methylenetetrahydrofolate is transferred onto alpha-ketoisovalerate to form ketopantoate. This Shigella dysenteriae serotype 1 (strain Sd197) protein is 3-methyl-2-oxobutanoate hydroxymethyltransferase.